Here is a 354-residue protein sequence, read N- to C-terminus: Uroporphyrinogen decarboxylase (354 aa).

Residues 27 to 31, Asp77, Tyr154, Thr209, and His327 contribute to the substrate site; that span reads RQAGR.

This sequence belongs to the uroporphyrinogen decarboxylase family. As to quaternary structure, homodimer.

It localises to the cytoplasm. The catalysed reaction is uroporphyrinogen III + 4 H(+) = coproporphyrinogen III + 4 CO2. The protein operates within porphyrin-containing compound metabolism; protoporphyrin-IX biosynthesis; coproporphyrinogen-III from 5-aminolevulinate: step 4/4. Catalyzes the decarboxylation of four acetate groups of uroporphyrinogen-III to yield coproporphyrinogen-III. The sequence is that of Uroporphyrinogen decarboxylase from Enterobacter sp. (strain 638).